The primary structure comprises 80 residues: Small ribosomal subunit protein uS17 (80 aa).

The protein belongs to the universal ribosomal protein uS17 family. Part of the 30S ribosomal subunit.

One of the primary rRNA binding proteins, it binds specifically to the 5'-end of 16S ribosomal RNA. This Brucella suis (strain ATCC 23445 / NCTC 10510) protein is Small ribosomal subunit protein uS17.